The primary structure comprises 294 residues: MAHGIPSQGKVTITVDEYSSNPTQAFTHYNINQSRFQPPHVHMVDPIPYDTPKPAGHTRFVCISDTHSRTDGIQMPYGDILLHTGDFTELGLPSEVKKFNDWLGNLPYEYKIVIAGNHELTFDKEFMADLVKQDYYRFPSVSKLKPEDFDNVQSLLTNSIYLQDSEVTVKGFRIYGAPWTPWFNGWGFNLPRGQSLLDKWNLIPEGIDILMTHGPPLGFRDWVPKELQRVGCVELLNTVQRRIRPKLHVFGGIHEGYGIMTDGYTTYINASTCTVSFQPTNPPIIFDLPNPQGS.

Residues aspartate 65, histidine 67, aspartate 86, asparagine 117, and histidine 213 each contribute to the Mn(2+) site. 117–118 (NH) lines the GMP pocket. Residues 225–226 (KE) and 252–255 (GIHE) each bind GMP. A Mn(2+)-binding site is contributed by histidine 254.

This sequence belongs to the UPF0046 family. As to quaternary structure, homodimer. Mn(2+) serves as cofactor. Co(2+) is required as a cofactor.

Inhibited by nmolar levels of AMP and GMP. Its function is as follows. Displays low metallophosphoesterase activity (in vitro). May play a role in the development of the nervous system. The protein is Metallophosphoesterase MPPED2 (Mpped2) of Mus musculus (Mouse).